The primary structure comprises 83 residues: Putative membrane protein insertion efficiency factor (83 aa).

This sequence belongs to the UPF0161 family.

The protein localises to the cell inner membrane. Could be involved in insertion of integral membrane proteins into the membrane. This is Putative membrane protein insertion efficiency factor from Pelagibacter ubique (strain HTCC1062).